The following is a 162-amino-acid chain: Single-stranded DNA-binding protein 1 (162 aa).

An SSB domain is found at 5 to 110 (LNKVMLIGHL…IVCTDMQMLG (106 aa)). Residues 110–162 (GAKDSGGGTSDASYSQNRPSYSRPSRPEPSSGNYGASPSSGGAQEFEKDDLPF) are disordered. A compositionally biased stretch (low complexity) spans 122–140 (SYSQNRPSYSRPSRPEPSS). A compositionally biased stretch (polar residues) spans 141-151 (GNYGASPSSGG).

Homotetramer.

This chain is Single-stranded DNA-binding protein 1 (ssb1), found in Chlorobaculum tepidum (strain ATCC 49652 / DSM 12025 / NBRC 103806 / TLS) (Chlorobium tepidum).